The primary structure comprises 457 residues: MLPSQSPAIFTVSRLNQTVRLLLEHEIGQVWISGEISNFTQPASGHWYFTLKDDNAQVRCAMFRNSNRRVTFRPQHGQQVLVRANITLYEPRGDYQIIVESMQPAGEGLLQQKYEQLKAKLQAEGLFDQQLKKPLPSPAHCVGVITSKTGAALHDILHVLKRRDPSLPVIIYPTAVQGDDAPGQIVRAIELANKRNECDVLIVGRGGGSLEDLWSFNDERVARAIFASRIPVVSAVGHETDVTIADFIADLRAPTPSAAAEMVSRNQQELLRQIQSVQQRLGMAMDYFLANRTRRLTLLHHRLQQQHPQLRLARQQTALERLQQRMNLAIDSQIKRTNKRQVRLLQRLNQQNPQPRIHRVQSRIQHLEHRLAEHVHSRLSAMRERFGNAVTHLEAVSPLSTLARGYSVTTVTDGKVLKKVKQVKTGDVMTTRLEDGWVKSEVKGITSAKRAQKKKPD.

The protein belongs to the XseA family. Heterooligomer composed of large and small subunits.

Its subcellular location is the cytoplasm. The catalysed reaction is Exonucleolytic cleavage in either 5'- to 3'- or 3'- to 5'-direction to yield nucleoside 5'-phosphates.. Its function is as follows. Bidirectionally degrades single-stranded DNA into large acid-insoluble oligonucleotides, which are then degraded further into small acid-soluble oligonucleotides. The polypeptide is Exodeoxyribonuclease 7 large subunit (Escherichia coli O127:H6 (strain E2348/69 / EPEC)).